The sequence spans 700 residues: Dymeclin (700 aa).

Gly2 carries the N-myristoyl glycine lipid modification. Ser347 is subject to Phosphoserine.

It belongs to the dymeclin family.

This Drosophila pseudoobscura pseudoobscura (Fruit fly) protein is Dymeclin.